Reading from the N-terminus, the 704-residue chain is Glycine--tRNA ligase beta subunit (704 aa).

The protein belongs to the class-II aminoacyl-tRNA synthetase family. Tetramer of two alpha and two beta subunits.

The protein localises to the cytoplasm. It catalyses the reaction tRNA(Gly) + glycine + ATP = glycyl-tRNA(Gly) + AMP + diphosphate. This is Glycine--tRNA ligase beta subunit from Rhizobium etli (strain ATCC 51251 / DSM 11541 / JCM 21823 / NBRC 15573 / CFN 42).